Reading from the N-terminus, the 242-residue chain is Ribosomal RNA large subunit methyltransferase E (242 aa).

S-adenosyl-L-methionine contacts are provided by glycine 88, tryptophan 90, aspartate 111, aspartate 127, and aspartate 151. The active-site Proton acceptor is the lysine 191.

The protein belongs to the class I-like SAM-binding methyltransferase superfamily. RNA methyltransferase RlmE family.

The protein resides in the cytoplasm. It carries out the reaction uridine(2552) in 23S rRNA + S-adenosyl-L-methionine = 2'-O-methyluridine(2552) in 23S rRNA + S-adenosyl-L-homocysteine + H(+). Its function is as follows. Specifically methylates the uridine in position 2552 of 23S rRNA at the 2'-O position of the ribose in the fully assembled 50S ribosomal subunit. The protein is Ribosomal RNA large subunit methyltransferase E of Bartonella tribocorum (strain CIP 105476 / IBS 506).